A 199-amino-acid chain; its full sequence is Superoxide dismutase [Mn/Fe] (199 aa).

Fe(3+) contacts are provided by histidine 27, histidine 81, aspartate 161, and histidine 165. The Mn(2+) site is built by histidine 27, histidine 81, aspartate 161, and histidine 165.

Belongs to the iron/manganese superoxide dismutase family. As to quaternary structure, homodimer. The cofactor is Mn(2+). Requires Fe(3+) as cofactor.

It catalyses the reaction 2 superoxide + 2 H(+) = H2O2 + O2. Destroys superoxide anion radicals which are normally produced within the cells and which are toxic to biological systems. Catalyzes the dismutation of superoxide anion radicals into O2 and H2O2 by successive reduction and oxidation of the transition metal ion at the active site. This chain is Superoxide dismutase [Mn/Fe] (sodA), found in Staphylococcus saprophyticus subsp. saprophyticus (strain ATCC 15305 / DSM 20229 / NCIMB 8711 / NCTC 7292 / S-41).